The primary structure comprises 205 residues: Golgi apparatus membrane protein TVP23 homolog B (205 aa).

Position 1 is an N-acetylmethionine (Met-1). The disordered stretch occupies residues 1–21; sequence MLQQDSNDDTEDVSLFDAEEE. 4 helical membrane passes run 34-53, 54-72, 126-146, and 152-172; these read PVAS…VYLL, CGLL…ILLL, IFWL…FSAL, and KWLA…YGYI.

It belongs to the TVP23 family.

It is found in the membrane. In Homo sapiens (Human), this protein is Golgi apparatus membrane protein TVP23 homolog B (TVP23B).